Consider the following 478-residue polypeptide: Protein nucleotidyltransferase YdiU (478 aa).

The ATP site is built by Gly-84, Gly-86, Arg-87, Lys-107, Asp-119, Gly-120, Arg-170, and Arg-177. Catalysis depends on Asp-246, which acts as the Proton acceptor. Asn-247 and Asp-256 together coordinate Mg(2+). Asp-256 contributes to the ATP binding site.

The protein belongs to the SELO family. The cofactor is Mg(2+). It depends on Mn(2+) as a cofactor.

The enzyme catalyses L-seryl-[protein] + ATP = 3-O-(5'-adenylyl)-L-seryl-[protein] + diphosphate. It catalyses the reaction L-threonyl-[protein] + ATP = 3-O-(5'-adenylyl)-L-threonyl-[protein] + diphosphate. It carries out the reaction L-tyrosyl-[protein] + ATP = O-(5'-adenylyl)-L-tyrosyl-[protein] + diphosphate. The catalysed reaction is L-histidyl-[protein] + UTP = N(tele)-(5'-uridylyl)-L-histidyl-[protein] + diphosphate. The enzyme catalyses L-seryl-[protein] + UTP = O-(5'-uridylyl)-L-seryl-[protein] + diphosphate. It catalyses the reaction L-tyrosyl-[protein] + UTP = O-(5'-uridylyl)-L-tyrosyl-[protein] + diphosphate. Nucleotidyltransferase involved in the post-translational modification of proteins. It can catalyze the addition of adenosine monophosphate (AMP) or uridine monophosphate (UMP) to a protein, resulting in modifications known as AMPylation and UMPylation. This is Protein nucleotidyltransferase YdiU from Escherichia coli O9:H4 (strain HS).